Reading from the N-terminus, the 486-residue chain is E3 ubiquitin-protein ligase TRIM50 (486 aa).

An RING-type zinc finger spans residues 16-57; it reads CPVCLEVFKEPLMLQCGHSYCKGCLLSLSRHLDSELRCPVCR. The B box-type zinc-finger motif lies at 84–125; that stretch reads PEPQVCTHHRNPLSLFCEKDQELICGLCGLLGSHQHHRVTPV. Zn(2+) contacts are provided by C89, H92, C111, and H117. 2 coiled-coil regions span residues 125-170 and 204-235; these read VSTV…ESDV and LVASLDMQLEQARGAQERLAQATCMLEQFGNE. The 200-residue stretch at 275 to 474 folds into the B30.2/SPRY domain; sequence DIKLTVWKRL…LPMVLPLPSG (200 aa). K372 bears the N6-acetyllysine mark.

It belongs to the TRIM/RBCC family. As to quaternary structure, can form dimers and trimers. Interacts with several E2 ubiquitin-conjugating enzymes, including UBE2L6, UBE2E1, UBE2E3. No interaction with UBE2H. Interacts with BECN1. Interacts with SQSTM1. Interacts with NLRP3. In terms of processing, auto-ubiquitinated. Acetylated by EP300 and KAT2B. HDAC6 drives TRIM50 deacetylation. Acetylation antagonizes with TRIM50 ubiquitination.

The protein localises to the cytoplasm. It catalyses the reaction S-ubiquitinyl-[E2 ubiquitin-conjugating enzyme]-L-cysteine + [acceptor protein]-L-lysine = [E2 ubiquitin-conjugating enzyme]-L-cysteine + N(6)-ubiquitinyl-[acceptor protein]-L-lysine.. Its function is as follows. E3 ubiquitin-protein ligase that ubiquitinates Beclin-1/BECN1 in a 'Lys-63'-dependent manner enhancing its binding to ULK1. In turn, promotes starvation-induced autophagy activation. Also interacts with p62/SQSTM1 protein and thereby induces the formation and the autophagy clearance of aggresome-associated polyubiquitinated proteins through HDAC6 interaction. Also promotes NLRP3 inflammasome activation by directly inducing NLRP3 oligomerization independent of its E3 ligase function. The polypeptide is E3 ubiquitin-protein ligase TRIM50 (TRIM50) (Sus scrofa (Pig)).